Here is a 184-residue protein sequence, read N- to C-terminus: Spiro-conjugate synthase (184 aa).

An intrachain disulfide couples Cys-57 to Cys-184. Position 115 (Gln-115) interacts with (1S,3R,6R,8R,9R,11R,14S,15S,19R,20R)-8-ethyl-9,15-dihydroxy-3,4,6,20-tetramethyl-21,23-dioxo-24-azapentacyclo[20.2.1.0(1,6).0(11,20).0(14,19)]pentacosa-4,12,22(25)-trien-25-olate.

As to quaternary structure, homodimer.

It carries out the reaction 4-[(1R,2R,4aS,5S,8aR)-2-[(2R,3R,5E,7E)-3-ethyl-2-hydroxy-5,7-dimethylnona-5,7-dien-1-yl]-5-hydroxy-1-methyl-1,2,4a,5,6,7,8,8a-octahydronaphthalene-1-carbonyl]-2-methylidene-5-oxo-2,5-dihydro-1H-pyrrol-3-olate = (1S,3R,6R,8R,9R,11R,14S,15S,19R,20R)-8-ethyl-9,15-dihydroxy-3,4,6,20-tetramethyl-21,23-dioxo-24-azapentacyclo[20.2.1.0(1,6).0(11,20).0(14,19)]pentacosa-4,12,22(25)-trien-25-olate. It participates in antibiotic biosynthesis. Involved in the biosynthesis of the spirotetramate antibiotics pyrroindomycins. Catalyzes the intramolecular cyclization forming the spiro-conjugate moiety in pyrroindomycins, via an exo-selective [4+2] cycloaddition reaction. The sequence is that of Spiro-conjugate synthase from Streptomyces rugosporus.